Here is a 461-residue protein sequence, read N- to C-terminus: tRNA(Ile)-lysidine synthase (461 aa).

ATP is bound at residue 26–31; that stretch reads SGGPDS.

It belongs to the tRNA(Ile)-lysidine synthase family.

The protein resides in the cytoplasm. It carries out the reaction cytidine(34) in tRNA(Ile2) + L-lysine + ATP = lysidine(34) in tRNA(Ile2) + AMP + diphosphate + H(+). Ligates lysine onto the cytidine present at position 34 of the AUA codon-specific tRNA(Ile) that contains the anticodon CAU, in an ATP-dependent manner. Cytidine is converted to lysidine, thus changing the amino acid specificity of the tRNA from methionine to isoleucine. The chain is tRNA(Ile)-lysidine synthase from Clostridium acetobutylicum (strain ATCC 824 / DSM 792 / JCM 1419 / IAM 19013 / LMG 5710 / NBRC 13948 / NRRL B-527 / VKM B-1787 / 2291 / W).